Reading from the N-terminus, the 78-residue chain is Putative membrane protein insertion efficiency factor (78 aa).

Belongs to the UPF0161 family.

The protein resides in the cell inner membrane. Functionally, could be involved in insertion of integral membrane proteins into the membrane. The sequence is that of Putative membrane protein insertion efficiency factor from Thiobacillus denitrificans (strain ATCC 25259 / T1).